Here is a 220-residue protein sequence, read N- to C-terminus: Exodeoxyribonuclease 10 (220 aa).

Requires Mg(2+) as cofactor.

Functionally, capable of degrading both single-strand and double-strand DNA with 3' to 5' polarity. Has higher affinity for ssDNA ends than for dsDNA. This Escherichia coli O6:H1 (strain CFT073 / ATCC 700928 / UPEC) protein is Exodeoxyribonuclease 10 (exoX).